We begin with the raw amino-acid sequence, 458 residues long: Adenylosuccinate synthetase (458 aa).

Residues 17 to 23 and 45 to 47 contribute to the GTP site; these read GDEGKGK and GHT. Aspartate 18 acts as the Proton acceptor in catalysis. The Mg(2+) site is built by aspartate 18 and glycine 45. Residues 18–21, 43–46, threonine 137, arginine 151, glutamine 247, threonine 262, and arginine 330 each bind IMP; these read DEGK and NAGH. Histidine 46 (proton donor) is an active-site residue. 326-332 contacts substrate; that stretch reads VTTGRSR. Residues arginine 332, 358–360, and 440–442 each bind GTP; these read KLD and STS.

This sequence belongs to the adenylosuccinate synthetase family. In terms of assembly, homodimer. Requires Mg(2+) as cofactor.

The protein resides in the cytoplasm. It carries out the reaction IMP + L-aspartate + GTP = N(6)-(1,2-dicarboxyethyl)-AMP + GDP + phosphate + 2 H(+). It functions in the pathway purine metabolism; AMP biosynthesis via de novo pathway; AMP from IMP: step 1/2. In terms of biological role, plays an important role in the de novo pathway of purine nucleotide biosynthesis. Catalyzes the first committed step in the biosynthesis of AMP from IMP. The protein is Adenylosuccinate synthetase of Acidovorax ebreus (strain TPSY) (Diaphorobacter sp. (strain TPSY)).